A 214-amino-acid polypeptide reads, in one-letter code: Adenylate kinase (214 aa).

An ATP-binding site is contributed by 14-19; that stretch reads GSGKGT. Positions 34–63 are NMP; that stretch reads SSGDLFRSAIKSATPLGSKAAEYINKGLLV. AMP is bound by residues Ser-35, Arg-40, 61 to 63, 89 to 92, and Gln-96; these read LLV and GFPR. Positions 130 to 163 are LID; it reads SRFICPACNYVYNQSQGFKECPTCHVALIRRSDD. Arg-131 is a binding site for ATP. Cys-134 and Cys-137 together coordinate Zn(2+). Residue 140–141 coordinates ATP; that stretch reads VY. Residues Cys-150 and Cys-153 each contribute to the Zn(2+) site. AMP-binding residues include Arg-160 and Arg-171. Position 199 (Thr-199) interacts with ATP.

This sequence belongs to the adenylate kinase family. As to quaternary structure, monomer.

The protein resides in the cytoplasm. It catalyses the reaction AMP + ATP = 2 ADP. Its pathway is purine metabolism; AMP biosynthesis via salvage pathway; AMP from ADP: step 1/1. Its function is as follows. Catalyzes the reversible transfer of the terminal phosphate group between ATP and AMP. Plays an important role in cellular energy homeostasis and in adenine nucleotide metabolism. In Chlamydia caviae (strain ATCC VR-813 / DSM 19441 / 03DC25 / GPIC) (Chlamydophila caviae), this protein is Adenylate kinase.